Consider the following 238-residue polypeptide: 15,16-dihydrobiliverdin:ferredoxin oxidoreductase (238 aa).

This sequence belongs to the HY2 family.

The catalysed reaction is 15,16-dihydrobiliverdin + oxidized 2[4Fe-4S]-[ferredoxin] = biliverdin IXalpha + reduced 2[4Fe-4S]-[ferredoxin] + 2 H(+). Functionally, catalyzes the two-electron reduction of biliverdin IX-alpha at the C15 methine bridge. The protein is 15,16-dihydrobiliverdin:ferredoxin oxidoreductase of Prochlorococcus marinus (strain NATL1A).